The primary structure comprises 233 residues: Biosynthetic peptidoglycan transglycosylase (233 aa).

The helical transmembrane segment at 8 to 28 (LIALPVGIFIFFNAYVYGNII) threads the bilayer.

It belongs to the glycosyltransferase 51 family.

The protein localises to the cell inner membrane. The enzyme catalyses [GlcNAc-(1-&gt;4)-Mur2Ac(oyl-L-Ala-gamma-D-Glu-L-Lys-D-Ala-D-Ala)](n)-di-trans,octa-cis-undecaprenyl diphosphate + beta-D-GlcNAc-(1-&gt;4)-Mur2Ac(oyl-L-Ala-gamma-D-Glu-L-Lys-D-Ala-D-Ala)-di-trans,octa-cis-undecaprenyl diphosphate = [GlcNAc-(1-&gt;4)-Mur2Ac(oyl-L-Ala-gamma-D-Glu-L-Lys-D-Ala-D-Ala)](n+1)-di-trans,octa-cis-undecaprenyl diphosphate + di-trans,octa-cis-undecaprenyl diphosphate + H(+). The protein operates within cell wall biogenesis; peptidoglycan biosynthesis. Functionally, peptidoglycan polymerase that catalyzes glycan chain elongation from lipid-linked precursors. This chain is Biosynthetic peptidoglycan transglycosylase, found in Neisseria meningitidis serogroup C (strain 053442).